Consider the following 213-residue polypeptide: Imidazole glycerol phosphate synthase subunit HisH 1 (213 aa).

In terms of domain architecture, Glutamine amidotransferase type-1 spans 3 to 213; that stretch reads SVSILDYGVG…LSIIQQFLQI (211 aa). Catalysis depends on Cys-81, which acts as the Nucleophile. Residues His-195 and Glu-197 contribute to the active site.

Heterodimer of HisH and HisF.

Its subcellular location is the cytoplasm. The enzyme catalyses 5-[(5-phospho-1-deoxy-D-ribulos-1-ylimino)methylamino]-1-(5-phospho-beta-D-ribosyl)imidazole-4-carboxamide + L-glutamine = D-erythro-1-(imidazol-4-yl)glycerol 3-phosphate + 5-amino-1-(5-phospho-beta-D-ribosyl)imidazole-4-carboxamide + L-glutamate + H(+). The catalysed reaction is L-glutamine + H2O = L-glutamate + NH4(+). It functions in the pathway amino-acid biosynthesis; L-histidine biosynthesis; L-histidine from 5-phospho-alpha-D-ribose 1-diphosphate: step 5/9. Functionally, IGPS catalyzes the conversion of PRFAR and glutamine to IGP, AICAR and glutamate. The HisH subunit provides the glutamine amidotransferase activity that produces the ammonia necessary to HisF for the synthesis of IGP and AICAR. The protein is Imidazole glycerol phosphate synthase subunit HisH 1 of Legionella pneumophila (strain Lens).